The primary structure comprises 267 residues: Probable aquaporin TIP3-2 (267 aa).

N-acetylmethionine is present on Met1. Ala2 carries the post-translational modification N-acetylalanine; in Probable aquaporin TIP3-2, N-terminally processed. The Cytoplasmic portion of the chain corresponds to 2–26 (ATSARRAYGFGRADEATHPDSIRAT). Residues 27–47 (LAEFLSTFVFVFAGEGSILAL) form a helical membrane-spanning segment. Over 48–66 (DKLYWDTAAHTGTNTPGGL) the chain is Vacuolar. Residues 67–87 (VLVALAHALALFAAVSAAINV) form a helical membrane-spanning segment. The Cytoplasmic portion of the chain corresponds to 88–110 (SGGHVNPAVTFAALIGGRISVIR). The NPA 1 motif lies at 93-95 (NPA). A helical transmembrane segment spans residues 111 to 131 (AIYYWVAQLIGAILACLLLRL). The Vacuolar portion of the chain corresponds to 132–151 (ATNGLRPVGFHVASGVSELH). Residues 152–172 (GLLMEIILTFALVYVVYSTAI) traverse the membrane as a helical segment. Residues 173 to 178 (DPKRGS) lie on the Cytoplasmic side of the membrane. A helical transmembrane segment spans residues 179 to 199 (IGIIAPLAIGLIVGANILVGG). Residues 200-226 (PFDGASMNPARAFGPALVGWRWSNHWI) are Vacuolar-facing. Residues 207–209 (NPA) carry the NPA 2 motif. A helical membrane pass occupies residues 227-247 (YWVGPFIGGALAALIYEYMII). Over 248 to 267 (PSVNEPPHHSTHQPLAPEDY) the chain is Cytoplasmic.

This sequence belongs to the MIP/aquaporin (TC 1.A.8) family. TIP (TC 1.A.8.10) subfamily. As to expression, predominantly expressed in developing seeds. Also expressed in rosette leaves.

The protein resides in the vacuole membrane. Aquaporins facilitate the transport of water and small neutral solutes across cell membranes. The protein is Probable aquaporin TIP3-2 (TIP3-2) of Arabidopsis thaliana (Mouse-ear cress).